Here is a 297-residue protein sequence, read N- to C-terminus: AKT-interacting protein (297 aa).

Residues 1–13 (MNLNPFWSMSTNT) show a composition bias toward polar residues. The interval 1–45 (MNLNPFWSMSTNTGRKRSDGEEQSGEQQQQQRASPARPSFGKKQL) is disordered. Residues 25–39 (GEQQQQQRASPARPS) show a composition bias toward low complexity. The region spanning 79–227 (YLEYSLLAEF…VVDSVKLCNS (149 aa)) is the UBC core domain. The tract at residues 262 to 297 (KRRPEDHHKGLQVSGLSWVKPGSTQPFSKDDNPPQN) is disordered.

This sequence belongs to the ubiquitin-conjugating enzyme family. FTS subfamily.

The protein localises to the cytoplasm. It localises to the cell membrane. Functionally, may function to promote vesicle trafficking and/or fusion. May also regulate apoptosis. The chain is AKT-interacting protein (aktip) from Salmo salar (Atlantic salmon).